The primary structure comprises 526 residues: Na(+)/H(+) antiporter NhaB (526 aa).

Transmembrane regions (helical) follow at residues 14 to 34 (FLGYAPDWYKLTIFGFLLINP), 35 to 55 (LLFYFVSPFWAGWLLVVEFIF), 99 to 119 (MLLVFMVAGIYFMKQLLLFVF), 122 to 142 (LLLRIHSKPLLSLAFCMAAAF), 146 to 166 (FLDALTVIAVIISVAIGFYGI), 206 to 226 (LMMHAGVGTALGGVMTMVGEP), 239 to 259 (FVDFFLRMSPVTVPVFICGIL), 307 to 327 (AVIGVWLIIALAFHLAEVGLI), 328 to 348 (GLSVIIMATTFCGVTEEHAIG), 357 to 377 (FTALLTVFFAIVAVIIDQQLF), 397 to 417 (YLFNGLLSSISDNVFVGSVYI), 451 to 471 (ATPNGQAAFLFLLTSSLAPLI), and 479 to 499 (VIMALPYTIVMTLVGLLCVEF).

This sequence belongs to the NhaB Na(+)/H(+) (TC 2.A.34) antiporter family.

The protein localises to the cell inner membrane. It catalyses the reaction 2 Na(+)(in) + 3 H(+)(out) = 2 Na(+)(out) + 3 H(+)(in). Na(+)/H(+) antiporter that extrudes sodium in exchange for external protons. The chain is Na(+)/H(+) antiporter NhaB from Pectobacterium atrosepticum (strain SCRI 1043 / ATCC BAA-672) (Erwinia carotovora subsp. atroseptica).